The primary structure comprises 226 residues: Ribonuclease 3 (226 aa).

The RNase III domain occupies 6–128 (INRLQRKLGY…LIGGVFLDSD (123 aa)). Glu41 is a binding site for Mg(2+). Residue Asp45 is part of the active site. Residues Asp114 and Glu117 each coordinate Mg(2+). Residue Glu117 is part of the active site. The 71-residue stretch at 155–225 (DPKTRLQEYL…AEQALKKLEL (71 aa)) folds into the DRBM domain.

It belongs to the ribonuclease III family. Homodimer. Mg(2+) is required as a cofactor.

The protein resides in the cytoplasm. It carries out the reaction Endonucleolytic cleavage to 5'-phosphomonoester.. Its function is as follows. Digests double-stranded RNA. Involved in the processing of primary rRNA transcript to yield the immediate precursors to the large and small rRNAs (23S and 16S). Processes some mRNAs, and tRNAs when they are encoded in the rRNA operon. Processes pre-crRNA and tracrRNA of type II CRISPR loci if present in the organism. This chain is Ribonuclease 3, found in Escherichia coli O139:H28 (strain E24377A / ETEC).